The sequence spans 260 residues: Proteasome subunit alpha (260 aa).

The protein belongs to the peptidase T1A family. The 20S proteasome core is composed of 14 alpha and 14 beta subunits that assemble into four stacked heptameric rings, resulting in a barrel-shaped structure. The two inner rings, each composed of seven catalytic beta subunits, are sandwiched by two outer rings, each composed of seven alpha subunits. The catalytic chamber with the active sites is on the inside of the barrel. Has a gated structure, the ends of the cylinder being occluded by the N-termini of the alpha-subunits. Is capped at one or both ends by the proteasome regulatory ATPase, PAN.

Its subcellular location is the cytoplasm. Its activity is regulated as follows. The formation of the proteasomal ATPase PAN-20S proteasome complex, via the docking of the C-termini of PAN into the intersubunit pockets in the alpha-rings, triggers opening of the gate for substrate entry. Interconversion between the open-gate and close-gate conformations leads to a dynamic regulation of the 20S proteasome proteolysis activity. Component of the proteasome core, a large protease complex with broad specificity involved in protein degradation. The polypeptide is Proteasome subunit alpha (Thermococcus kodakarensis (strain ATCC BAA-918 / JCM 12380 / KOD1) (Pyrococcus kodakaraensis (strain KOD1))).